Consider the following 242-residue polypeptide: MATDGENGRHQEVGHKSLLQSDALYQYILETSVYPREPEPMKELREITAKHPWNLMTTSADEGQFLSMLIKLINAKNTMEIGVFTGYSLLATAMALPDDGKILAMDINRENYEIGLPVIEKAGLAHKIEFKEGPALPVLDQMIEDGKYHGSYDFIFVDADKDNYLNYHKRLIDLVKIGGLIGYDNTLWNGSVVAPPDAPLRKYVRYYRDFVLELNKALAADSRIEICQLPVGDGITLCRRIS.

A substrate-binding site is contributed by Lys16. S-adenosyl-L-methionine-binding positions include Thr58, Glu80, 82–83 (GV), Ser88, Asp106, and Ala135. Asp158 contributes to the substrate binding site. Asp158 serves as a coordination point for a divalent metal cation. Asp160 contacts S-adenosyl-L-methionine. Positions 184 and 185 each coordinate a divalent metal cation. Asn189 is a substrate binding site.

This sequence belongs to the class I-like SAM-binding methyltransferase superfamily. Cation-dependent O-methyltransferase family. CCoAMT subfamily. Requires Mg(2+) as cofactor. Mostly expressed in the bottom and middle parts of the stems.

The catalysed reaction is (E)-caffeoyl-CoA + S-adenosyl-L-methionine = (E)-feruloyl-CoA + S-adenosyl-L-homocysteine + H(+). It functions in the pathway aromatic compound metabolism; phenylpropanoid biosynthesis. In terms of biological role, methylates caffeoyl-CoA to feruloyl-CoA and 5-hydroxyferuloyl-CoA to sinapoyl-CoA. Plays a role in the synthesis of feruloylated polysaccharides. Involved in the reinforcement of the plant cell wall. Also involved in the responding to wounding or pathogen challenge by the increased formation of cell wall-bound ferulic acid polymers. This Nicotiana tabacum (Common tobacco) protein is Caffeoyl-CoA O-methyltransferase 4 (CCOAOMT4).